We begin with the raw amino-acid sequence, 179 residues long: Methylated-DNA--protein-cysteine methyltransferase, inducible (179 aa).

The active-site Nucleophile; methyl group acceptor is the C141.

The protein belongs to the MGMT family.

The enzyme catalyses a 6-O-methyl-2'-deoxyguanosine in DNA + L-cysteinyl-[protein] = S-methyl-L-cysteinyl-[protein] + a 2'-deoxyguanosine in DNA. It carries out the reaction a 4-O-methyl-thymidine in DNA + L-cysteinyl-[protein] = a thymidine in DNA + S-methyl-L-cysteinyl-[protein]. Involved in the cellular defense against the biological effects of O6-methylguanine (O6-MeG) and O4-methylthymine (O4-MeT) in DNA. Repairs the methylated nucleobase in DNA by stoichiometrically transferring the methyl group to a cysteine residue in the enzyme. This is a suicide reaction: the enzyme is irreversibly inactivated. The sequence is that of Methylated-DNA--protein-cysteine methyltransferase, inducible (adaB) from Bacillus subtilis (strain 168).